The sequence spans 316 residues: Aspartate carbamoyltransferase catalytic subunit (316 aa).

2 residues coordinate carbamoyl phosphate: Arg56 and Thr57. Lys84 is a binding site for L-aspartate. Positions 106, 139, and 142 each coordinate carbamoyl phosphate. L-aspartate-binding residues include Arg172 and Arg226. Residues Gly267 and Pro268 each coordinate carbamoyl phosphate.

Belongs to the aspartate/ornithine carbamoyltransferase superfamily. ATCase family. Heterododecamer (2C3:3R2) of six catalytic PyrB chains organized as two trimers (C3), and six regulatory PyrI chains organized as three dimers (R2).

The catalysed reaction is carbamoyl phosphate + L-aspartate = N-carbamoyl-L-aspartate + phosphate + H(+). The protein operates within pyrimidine metabolism; UMP biosynthesis via de novo pathway; (S)-dihydroorotate from bicarbonate: step 2/3. Functionally, catalyzes the condensation of carbamoyl phosphate and aspartate to form carbamoyl aspartate and inorganic phosphate, the committed step in the de novo pyrimidine nucleotide biosynthesis pathway. In Mycobacterium sp. (strain MCS), this protein is Aspartate carbamoyltransferase catalytic subunit.